The primary structure comprises 38 residues: Photosystem II reaction center protein L (38 aa).

Residues 17–37 (SLYWGLLLIFVLAILFSSYIF) form a helical membrane-spanning segment.

This sequence belongs to the PsbL family. In terms of assembly, PSII is composed of 1 copy each of membrane proteins PsbA, PsbB, PsbC, PsbD, PsbE, PsbF, PsbH, PsbI, PsbJ, PsbK, PsbL, PsbM, PsbT, PsbX, PsbY, PsbZ, Psb30/Ycf12, at least 3 peripheral proteins of the oxygen-evolving complex and a large number of cofactors. It forms dimeric complexes.

It is found in the plastid. The protein resides in the chloroplast thylakoid membrane. Its function is as follows. One of the components of the core complex of photosystem II (PSII). PSII is a light-driven water:plastoquinone oxidoreductase that uses light energy to abstract electrons from H(2)O, generating O(2) and a proton gradient subsequently used for ATP formation. It consists of a core antenna complex that captures photons, and an electron transfer chain that converts photonic excitation into a charge separation. This subunit is found at the monomer-monomer interface and is required for correct PSII assembly and/or dimerization. This is Photosystem II reaction center protein L from Mesostigma viride (Green alga).